We begin with the raw amino-acid sequence, 470 residues long: 3-oxo-isoapionate kinase (470 aa).

2 residues coordinate substrate: Asp30 and Arg78. ATP is bound by residues Ser291, 403 to 406 (GGDS), and Gly451.

This sequence belongs to the four-carbon acid sugar kinase family.

It carries out the reaction 3-oxoisoapionate + ATP = 3-oxoisoapionate 4-phosphate + ADP + H(+). It functions in the pathway carbohydrate metabolism. Its function is as follows. Involved in catabolism of D-apiose. Catalyzes the phosphorylation of 3-oxo-isoapionate to 3-oxo-isoapionate 4-phosphate. The chain is 3-oxo-isoapionate kinase from Paraburkholderia graminis (strain ATCC 700544 / DSM 17151 / LMG 18924 / NCIMB 13744 / C4D1M).